The chain runs to 374 residues: MAKRDFYEILGVGKSASDEEIKKAYRKLAMKHHPDRNPDSKGAEDKFKEAKEAYEMLSDPQKRDAYDRYGHAGVDPNMGGGGGGGGFADAFGDIFGDIFGQAGGGRGGRGGPQVYRGADLRYNLEITLEQAAHGYDTTIRVPSWDNCETCDGSGAKPGTSPVNCTTCGGHGQVRMQQGFFSVLQTCPKCHGSGKINPSPCGTCSGAGKIKRNKTLEVKIPSGIDDGMRIRSSGNGEPGMNGGPPGDLYVEIRIKQHPMFQRDGDDLHCEIPISFAKAALGGEIEVPTLNGKASFTIPEGTQSGKTFRLRSKGIKGVRSGYAGDLFCHVIVETPVTLTERQKELMREFEQLTIEGGSKHSPQTKSWKDKVKEFFE.

The region spanning 5-70 (DFYEILGVGK…QKRDAYDRYG (66 aa)) is the J domain. A disordered region spans residues 29 to 50 (AMKHHPDRNPDSKGAEDKFKEA). The segment covering 35 to 50 (DRNPDSKGAEDKFKEA) has biased composition (basic and acidic residues). Residues 134–212 (GYDTTIRVPS…CSGAGKIKRN (79 aa)) form a CR-type zinc finger. The Zn(2+) site is built by Cys147, Cys150, Cys164, Cys167, Cys186, Cys189, Cys200, and Cys203. CXXCXGXG motif repeat units follow at residues 147 to 154 (CETCDGSG), 164 to 171 (CTTCGGHG), 186 to 193 (CPKCHGSG), and 200 to 207 (CGTCSGAG).

The protein belongs to the DnaJ family. Homodimer. Zn(2+) serves as cofactor.

Its subcellular location is the cytoplasm. In terms of biological role, participates actively in the response to hyperosmotic and heat shock by preventing the aggregation of stress-denatured proteins and by disaggregating proteins, also in an autonomous, DnaK-independent fashion. Unfolded proteins bind initially to DnaJ; upon interaction with the DnaJ-bound protein, DnaK hydrolyzes its bound ATP, resulting in the formation of a stable complex. GrpE releases ADP from DnaK; ATP binding to DnaK triggers the release of the substrate protein, thus completing the reaction cycle. Several rounds of ATP-dependent interactions between DnaJ, DnaK and GrpE are required for fully efficient folding. Also involved, together with DnaK and GrpE, in the DNA replication of plasmids through activation of initiation proteins. The polypeptide is Chaperone protein DnaJ (Janthinobacterium sp. (strain Marseille) (Minibacterium massiliensis)).